Reading from the N-terminus, the 294-residue chain is MEEVVAEELDDEEQLVRRHRKEKKELQAKIQGMKNAVPKNDKKRRKQLTEDVAKLEREMEQKHREELEQLKQLTFKDSKIDSVAVNISNLVLENQPPRISKAQKRREKKAALEKEREERIAEAEIENLSGARHLESEKLAQILAARELEIKQIPSDGHCMYGALEDQLREQDCALTVASLRRQTAEYMQTHSDDFLPFLTNPSTGDMYTPEEFGKYCDDIVNTAAWGGQLELRALSHILQTPIEILQADAPPIIVGEEYPRNPLVLVYMRHAYGLGEHYNSVTRLVNSATENCS.

At Met-1 the chain carries N-acetylmethionine. Residues 148 to 285 (LEIKQIPSDG…GEHYNSVTRL (138 aa)) form the OTU domain. A cys-loop region spans residues 153-159 (IPSDGHC). Asp-156 is an active-site residue. Cys-159 (nucleophile) is an active-site residue. Residues 220 to 230 (IVNTAAWGGQL) form a variable-loop region. The interval 268-278 (YMRHAYGLGEH) is his-loop. Residue His-278 is part of the active site.

In terms of assembly, interacts with the eukaryotic translation initiation factor 4F complex. As to expression, ubiquitously expressed. Expression is observed in several organ systems including the cardiovascular, digestive, central and peripheral nervous and musculoskeletal systems.

The catalysed reaction is Thiol-dependent hydrolysis of ester, thioester, amide, peptide and isopeptide bonds formed by the C-terminal Gly of ubiquitin (a 76-residue protein attached to proteins as an intracellular targeting signal).. Its function is as follows. Deubiquitinating enzyme that may play a role in the ubiquitin-dependent regulation of protein synthesis, downstream of mTORC1. May associate with the protein synthesis initiation complex and modify its ubiquitination to repress translation. May also repress DNA synthesis and modify different cellular targets thereby regulating cell growth and proliferation. May also play a role in proteasome assembly and function. This Mus musculus (Mouse) protein is Deubiquitinase OTUD6B.